A 45-amino-acid chain; its full sequence is MTKRTFGGTSRKRKRVSGFRVRMRTHTGRSVIRSRRKKGRSRIAV.

The segment at 1-45 is disordered; that stretch reads MTKRTFGGTSRKRKRVSGFRVRMRTHTGRSVIRSRRKKGRSRIAV. Residues 10 to 45 show a composition bias toward basic residues; that stretch reads SRKRKRVSGFRVRMRTHTGRSVIRSRRKKGRSRIAV.

It belongs to the bacterial ribosomal protein bL34 family.

This Prochlorococcus marinus (strain SARG / CCMP1375 / SS120) protein is Large ribosomal subunit protein bL34.